A 369-amino-acid polypeptide reads, in one-letter code: Glutamate 5-kinase (369 aa).

Lys-9 lines the ATP pocket. Substrate-binding residues include Ser-49, Asp-136, and Asn-148. Residues 168 to 169 (TD) and 210 to 216 (TGGMLTK) each bind ATP. The region spanning 275 to 355 (RGGVYVDEGA…KGVFIHRDDW (81 aa)) is the PUA domain.

This sequence belongs to the glutamate 5-kinase family.

Its subcellular location is the cytoplasm. The catalysed reaction is L-glutamate + ATP = L-glutamyl 5-phosphate + ADP. It participates in amino-acid biosynthesis; L-proline biosynthesis; L-glutamate 5-semialdehyde from L-glutamate: step 1/2. Functionally, catalyzes the transfer of a phosphate group to glutamate to form L-glutamate 5-phosphate. This Neisseria meningitidis serogroup A / serotype 4A (strain DSM 15465 / Z2491) protein is Glutamate 5-kinase.